Reading from the N-terminus, the 201-residue chain is Cell division protein SepF (201 aa).

Basic and acidic residues predominate over residues 27–38 (VQERTSVQRDSR). Positions 27–99 (VQERTSVQRD…PRVQNKDSVR (73 aa)) are disordered. Residues 43 to 54 (QEASQRSHMTNS) show a composition bias toward polar residues. A compositionally biased stretch (basic and acidic residues) spans 72-81 (NRQERQRVQR). The span at 83–92 (NAYQQATPRV) shows a compositional bias: polar residues.

It belongs to the SepF family. As to quaternary structure, homodimer. Interacts with FtsZ.

Its subcellular location is the cytoplasm. Functionally, cell division protein that is part of the divisome complex and is recruited early to the Z-ring. Probably stimulates Z-ring formation, perhaps through the cross-linking of FtsZ protofilaments. Its function overlaps with FtsA. The protein is Cell division protein SepF of Streptococcus agalactiae serotype V (strain ATCC BAA-611 / 2603 V/R).